The primary structure comprises 106 residues: Small ribosomal subunit protein uS10 (106 aa).

It belongs to the universal ribosomal protein uS10 family. Part of the 30S ribosomal subunit.

In terms of biological role, involved in the binding of tRNA to the ribosomes. This is Small ribosomal subunit protein uS10 from Synechococcus sp. (strain CC9902).